The chain runs to 962 residues: Translation initiation factor IF-2 (962 aa).

Positions 52-77 (RSHGQADDSSRKKITLTKRETSEIRQ) are enriched in basic and acidic residues. Disordered stretches follow at residues 52–87 (RSHG…TRTV) and 121–378 (AVEE…EPVV). The span at 78 to 87 (SDGTGKTRTV) shows a compositional bias: polar residues. 3 stretches are compositionally biased toward basic and acidic residues: residues 123-183 (EEAR…KAEE), 197-250 (DSSR…EAEA), and 267-278 (PSERKAEEKKAE). Residues 342–355 (TSGGVGGWRGGPRG) are compositionally biased toward gly residues. The region spanning 462–631 (PRPPVVTVMG…LLQAEVLELT (170 aa)) is the tr-type G domain. The segment at 471–478 (GHVDHGKT) is G1. Position 471 to 478 (471 to 478 (GHVDHGKT)) interacts with GTP. Positions 496-500 (GITQH) are G2. The interval 517 to 520 (DTPG) is G3. GTP is bound by residues 517-521 (DTPGH) and 571-574 (NKID). A G4 region spans residues 571–574 (NKID). A G5 region spans residues 607–609 (SAK).

This sequence belongs to the TRAFAC class translation factor GTPase superfamily. Classic translation factor GTPase family. IF-2 subfamily.

It is found in the cytoplasm. Functionally, one of the essential components for the initiation of protein synthesis. Protects formylmethionyl-tRNA from spontaneous hydrolysis and promotes its binding to the 30S ribosomal subunits. Also involved in the hydrolysis of GTP during the formation of the 70S ribosomal complex. The sequence is that of Translation initiation factor IF-2 from Cupriavidus necator (strain ATCC 17699 / DSM 428 / KCTC 22496 / NCIMB 10442 / H16 / Stanier 337) (Ralstonia eutropha).